The primary structure comprises 429 residues: Enolase (429 aa).

(2R)-2-phosphoglycerate is bound at residue Gln174. Catalysis depends on Glu218, which acts as the Proton donor. Asp254, Glu295, and Asp321 together coordinate Mg(2+). The (2R)-2-phosphoglycerate site is built by Lys346, Arg375, Ser376, and Lys397. The Proton acceptor role is filled by Lys346.

It belongs to the enolase family. It depends on Mg(2+) as a cofactor.

Its subcellular location is the cytoplasm. The protein localises to the secreted. The protein resides in the cell surface. The catalysed reaction is (2R)-2-phosphoglycerate = phosphoenolpyruvate + H2O. It functions in the pathway carbohydrate degradation; glycolysis; pyruvate from D-glyceraldehyde 3-phosphate: step 4/5. Catalyzes the reversible conversion of 2-phosphoglycerate (2-PG) into phosphoenolpyruvate (PEP). It is essential for the degradation of carbohydrates via glycolysis. This is Enolase from Methanosarcina acetivorans (strain ATCC 35395 / DSM 2834 / JCM 12185 / C2A).